Consider the following 364-residue polypeptide: Methylthioribose-1-phosphate isomerase (364 aa).

Substrate contacts are provided by residues Arg46–Ala48, Arg89, and Gln196. Asp237 serves as the catalytic Proton donor. Asn247 to Lys248 contributes to the substrate binding site.

The protein belongs to the eIF-2B alpha/beta/delta subunits family. MtnA subfamily.

The enzyme catalyses 5-(methylsulfanyl)-alpha-D-ribose 1-phosphate = 5-(methylsulfanyl)-D-ribulose 1-phosphate. It functions in the pathway amino-acid biosynthesis; L-methionine biosynthesis via salvage pathway; L-methionine from S-methyl-5-thio-alpha-D-ribose 1-phosphate: step 1/6. Catalyzes the interconversion of methylthioribose-1-phosphate (MTR-1-P) into methylthioribulose-1-phosphate (MTRu-1-P). This chain is Methylthioribose-1-phosphate isomerase, found in Pelotomaculum thermopropionicum (strain DSM 13744 / JCM 10971 / SI).